The primary structure comprises 142 residues: Large ribosomal subunit protein uL13 (142 aa).

The protein belongs to the universal ribosomal protein uL13 family. In terms of assembly, part of the 50S ribosomal subunit.

In terms of biological role, this protein is one of the early assembly proteins of the 50S ribosomal subunit, although it is not seen to bind rRNA by itself. It is important during the early stages of 50S assembly. The sequence is that of Large ribosomal subunit protein uL13 from Acidovorax sp. (strain JS42).